The sequence spans 461 residues: Alcaligin biosynthesis enzyme (461 aa).

An FAD-binding site is contributed by 9-15; sequence VAIGIGP.

It belongs to the lysine N(6)-hydroxylase/L-ornithine N(5)-oxygenase family. Requires FAD as cofactor.

The protein operates within siderophore biosynthesis; alcaligin biosynthesis. This Bordetella parapertussis (strain 12822 / ATCC BAA-587 / NCTC 13253) protein is Alcaligin biosynthesis enzyme (alcA).